Reading from the N-terminus, the 319-residue chain is Tetrahydromethanopterin S-methyltransferase subunit H (319 aa).

This sequence belongs to the MtrH family. As to quaternary structure, the complex is composed of 8 subunits; MtrA, MtrB, MtrC, MtrD, MtrE, MtrF, MtrG and MtrH.

The catalysed reaction is 5-methyl-5,6,7,8-tetrahydromethanopterin + coenzyme M + 2 Na(+)(in) = 5,6,7,8-tetrahydromethanopterin + methyl-coenzyme M + 2 Na(+)(out). The protein operates within one-carbon metabolism; methanogenesis from CO(2); methyl-coenzyme M from 5,10-methylene-5,6,7,8-tetrahydromethanopterin: step 2/2. Functionally, part of a complex that catalyzes the formation of methyl-coenzyme M and tetrahydromethanopterin from coenzyme M and methyl-tetrahydromethanopterin. This is an energy-conserving, sodium-ion translocating step. MtrH catalyzes the transfer of the methyl group from methyl-tetrahydromethanopterin to the corrinoid prosthetic group of MtrA. This Methanococcus vannielii (strain ATCC 35089 / DSM 1224 / JCM 13029 / OCM 148 / SB) protein is Tetrahydromethanopterin S-methyltransferase subunit H.